Here is a 737-residue protein sequence, read N- to C-terminus: Photosystem I P700 chlorophyll a apoprotein A2 (737 aa).

The next 8 helical transmembrane spans lie at 46–69 (LFST…FHIA), 135–158 (LYQG…LHLQ), 175–199 (LNHH…HVAI), 273–291 (IAHH…GHMY), 333–356 (LHFQ…QHMY), 372–398 (AALY…IFFI), 420–442 (AIIS…LYVH), and 520–538 (FLVH…LILV). [4Fe-4S] cluster is bound by residues cysteine 562 and cysteine 571. Helical transmembrane passes span 578-599 (AFYL…YWHW) and 646-668 (LAVW…MFLI). Positions 657, 665, and 673 each coordinate chlorophyll a. Residue tryptophan 674 participates in phylloquinone binding. The chain crosses the membrane as a helical span at residues 710 to 730 (VVGLAHFTVGYVLTYAAFLIA).

Belongs to the PsaA/PsaB family. The PsaA/B heterodimer binds the P700 chlorophyll special pair and subsequent electron acceptors. PSI consists of a core antenna complex that captures photons, and an electron transfer chain that converts photonic excitation into a charge separation. The cyanobacterial PSI reaction center is composed of one copy each of PsaA,B,C,D,E,F,I,J,K,L,M and X, and forms trimeric complexes. PSI electron transfer chain: 5 chlorophyll a, 1 chlorophyll a', 2 phylloquinones and 3 4Fe-4S clusters. PSI core antenna: 90 chlorophyll a, 22 carotenoids, 3 phospholipids and 1 galactolipid. P700 is a chlorophyll a/chlorophyll a' dimer, A0 is one or more chlorophyll a, A1 is one or both phylloquinones and FX is a shared 4Fe-4S iron-sulfur center. serves as cofactor.

Its subcellular location is the cellular thylakoid membrane. It catalyses the reaction reduced [plastocyanin] + hnu + oxidized [2Fe-2S]-[ferredoxin] = oxidized [plastocyanin] + reduced [2Fe-2S]-[ferredoxin]. PsaA and PsaB bind P700, the primary electron donor of photosystem I (PSI), as well as the electron acceptors A0, A1 and FX. PSI is a plastocyanin/cytochrome c6-ferredoxin oxidoreductase, converting photonic excitation into a charge separation, which transfers an electron from the donor P700 chlorophyll pair to the spectroscopically characterized acceptors A0, A1, FX, FA and FB in turn. Oxidized P700 is reduced on the lumenal side of the thylakoid membrane by plastocyanin or cytochrome c6. This is Photosystem I P700 chlorophyll a apoprotein A2 from Synechococcus sp. (strain CC9605).